A 274-amino-acid polypeptide reads, in one-letter code: Thiamine kinase (274 aa).

Belongs to the thiamine kinase family.

The enzyme catalyses thiamine + ATP = thiamine phosphate + ADP + H(+). The protein operates within cofactor biosynthesis; thiamine diphosphate biosynthesis; thiamine phosphate from thiamine: step 1/1. Catalyzes the ATP-dependent phosphorylation of thiamine to thiamine phosphate. Is involved in thiamine salvage. This is Thiamine kinase from Escherichia coli O6:K15:H31 (strain 536 / UPEC).